The chain runs to 369 residues: Phospho-N-acetylmuramoyl-pentapeptide-transferase (369 aa).

The next 10 membrane-spanning stretches (helical) occupy residues 3-23 (ALLFAGAFSLAFTLFLTPLFI), 53-73 (GGIVIILASVLGYFVGHLLTW), 81-101 (VTPSGLLVVFMMVGLGFVGFL), 118-138 (WQKIAGQVVVATVFAVLAITL), 162-182 (FMALGAVIGTGLFIVWICLIV), 198-218 (LAAGASIFSIGSYVIIGFWQF), 240-260 (PLDLAIIAASIVGALIGFLWW), 267-287 (IFMGDTGSLGLGGALAALAIL), 290-310 (TELLLVFIGGLFVIVAGSVVL), and 347-367 (FWIIAGLLVAAGVGTFYLEWI).

Belongs to the glycosyltransferase 4 family. MraY subfamily. It depends on Mg(2+) as a cofactor.

It is found in the cell membrane. It catalyses the reaction UDP-N-acetyl-alpha-D-muramoyl-L-alanyl-gamma-D-glutamyl-meso-2,6-diaminopimeloyl-D-alanyl-D-alanine + di-trans,octa-cis-undecaprenyl phosphate = di-trans,octa-cis-undecaprenyl diphospho-N-acetyl-alpha-D-muramoyl-L-alanyl-D-glutamyl-meso-2,6-diaminopimeloyl-D-alanyl-D-alanine + UMP. Its pathway is cell wall biogenesis; peptidoglycan biosynthesis. Functionally, catalyzes the initial step of the lipid cycle reactions in the biosynthesis of the cell wall peptidoglycan: transfers peptidoglycan precursor phospho-MurNAc-pentapeptide from UDP-MurNAc-pentapeptide onto the lipid carrier undecaprenyl phosphate, yielding undecaprenyl-pyrophosphoryl-MurNAc-pentapeptide, known as lipid I. The chain is Phospho-N-acetylmuramoyl-pentapeptide-transferase from Clavibacter michiganensis subsp. michiganensis (strain NCPPB 382).